We begin with the raw amino-acid sequence, 192 residues long: Peptide deformylase (192 aa).

Residues Cys-102 and His-145 each coordinate Fe cation. Glu-146 is an active-site residue. His-149 lines the Fe cation pocket.

Belongs to the polypeptide deformylase family. It depends on Fe(2+) as a cofactor.

The enzyme catalyses N-terminal N-formyl-L-methionyl-[peptide] + H2O = N-terminal L-methionyl-[peptide] + formate. Removes the formyl group from the N-terminal Met of newly synthesized proteins. Requires at least a dipeptide for an efficient rate of reaction. N-terminal L-methionine is a prerequisite for activity but the enzyme has broad specificity at other positions. In Thermus thermophilus (strain ATCC BAA-163 / DSM 7039 / HB27), this protein is Peptide deformylase.